Consider the following 447-residue polypeptide: Argininosuccinate synthase (447 aa).

ATP-binding positions include Ala-20–Ser-28 and Ala-46. Tyr-102 serves as a coordination point for L-citrulline. Residues Gly-132 and Thr-134 each contribute to the ATP site. L-aspartate is bound by residues Thr-134, Asn-138, and Asp-139. Asn-138 contacts L-citrulline. Asp-139 is a binding site for ATP. Arg-142 and Ser-195 together coordinate L-citrulline. Asp-197 provides a ligand contact to ATP. Positions 204, 206, and 283 each coordinate L-citrulline.

This sequence belongs to the argininosuccinate synthase family. Type 2 subfamily. Homotetramer.

It localises to the cytoplasm. It carries out the reaction L-citrulline + L-aspartate + ATP = 2-(N(omega)-L-arginino)succinate + AMP + diphosphate + H(+). It participates in amino-acid biosynthesis; L-arginine biosynthesis; L-arginine from L-ornithine and carbamoyl phosphate: step 2/3. This chain is Argininosuccinate synthase (argG), found in Neisseria meningitidis serogroup A / serotype 4A (strain DSM 15465 / Z2491).